The primary structure comprises 310 residues: Olfactory receptor 5P52 (310 aa).

At 1–25 the chain is on the extracellular side; it reads MEAENHTTVAELIILGLTEDPKLCI. The N-linked (GlcNAc...) asparagine glycan is linked to N5. The chain crosses the membrane as a helical span at residues 26 to 46; the sequence is VFFVIFLGVYIITLVGNISII. The Cytoplasmic portion of the chain corresponds to 47–54; the sequence is TLIRISSQ. A helical membrane pass occupies residues 55 to 75; sequence LHTPMYLFLSHLAFVDIVFST. The Extracellular segment spans residues 76 to 99; that stretch reads SVSVIMLMELLGHGLVLSVATCAA. An intrachain disulfide couples C97 to C189. Residues 100–120 form a helical membrane-spanning segment; that stretch reads QLCMTVSFGSAECFLLAAMAY. Topologically, residues 121 to 133 are cytoplasmic; it reads DRYVAICSPLLYS. Residues 134-154 traverse the membrane as a helical segment; that stretch reads TLMSSRVCFLLLGISYVGGFV. Topologically, residues 155-196 are extracellular; that stretch reads NGWTFTGCVLSLSFCGPTQINHFFCDFSPLLKVSCSDVSIIG. The chain crosses the membrane as a helical span at residues 197–217; the sequence is IIPSISSGSIIVVTVFVIAVS. The Cytoplasmic portion of the chain corresponds to 218–237; it reads YIYILITILKMRSTEGRHKA. A helical membrane pass occupies residues 238–258; the sequence is FSTCTSHLTAVTLFYGTITVI. The Extracellular portion of the chain corresponds to 259-271; sequence YVMPKSSYSTEQN. A helical membrane pass occupies residues 272 to 292; the sequence is KVISLFYTVVIPMLNPLIYSL. At 293–310 the chain is on the cytoplasmic side; that stretch reads RNRDVKDALRKAIVRVYS.

The protein belongs to the G-protein coupled receptor 1 family.

It is found in the cell membrane. In terms of biological role, potential odorant receptor. In Mus musculus (Mouse), this protein is Olfactory receptor 5P52.